We begin with the raw amino-acid sequence, 139 residues long: Putative nickel-responsive regulator (139 aa).

Ni(2+) is bound by residues His-79, His-90, His-92, and Cys-98.

It belongs to the transcriptional regulatory CopG/NikR family. It depends on Ni(2+) as a cofactor.

Its function is as follows. Transcriptional regulator. This Lawsonia intracellularis (strain PHE/MN1-00) protein is Putative nickel-responsive regulator.